We begin with the raw amino-acid sequence, 330 residues long: Palmitoyltransferase SWF1 (330 aa).

A helical membrane pass occupies residues 1 to 21 (MLLFLVFILVVSQVVLLLLSP). Over 22 to 50 (QFRDKFIFRWYYDEVYKPMILDNSRYRIK) the chain is Cytoplasmic. Residues 51 to 71 (FYVVPVFYLSVYSYMVYIFYS) traverse the membrane as a helical segment. At 72-86 (RTFAIISPMLTSIET) the chain is on the lumenal side. Residues 87–107 (YVVIPLMLILPLFFGSMSMII) traverse the membrane as a helical segment. Topologically, residues 108 to 181 (KPDSSNAHQI…GMGNYMYFYS (74 aa)) are cytoplasmic. Positions 134-184 (HECRTCKQVKPARSKHCTVCNSCIYLADHHCVWINNCVGMGNYMYFYSFLC) constitute a DHHC domain. The helical transmembrane segment at 182-202 (FLCSNLLLLSYSFIRLIFIQF) threads the bilayer. Residues 203-218 (NKSAYNTTPTGEKSLL) lie on the Lumenal side of the membrane. A helical membrane pass occupies residues 219–239 (ILSILCGSFTVILAVYCYFVF). The Cytoplasmic portion of the chain corresponds to 240–330 (ELVNSGMTTN…FINNLREFIG (91 aa)).

It belongs to the DHHC palmitoyltransferase family. SWF1 subfamily.

The protein resides in the endoplasmic reticulum membrane. It carries out the reaction L-cysteinyl-[protein] + hexadecanoyl-CoA = S-hexadecanoyl-L-cysteinyl-[protein] + CoA. Its function is as follows. Palmitoyltransferase that targets several endosomal SNAREs. Palmitoylates the SNAREs at cysteine residues close to the cytoplasmic end of their transmembrane domain. May have a role in the cellular quality control of transmembrane domain-containing proteins. The sequence is that of Palmitoyltransferase SWF1 (SWF1) from Candida glabrata (strain ATCC 2001 / BCRC 20586 / JCM 3761 / NBRC 0622 / NRRL Y-65 / CBS 138) (Yeast).